Consider the following 497-residue polypeptide: Cytochrome P450 71A12 (497 aa).

The chain crosses the membrane as a helical span at residues 4-24 (ILMVSLCLTTLITLFLLKQFL). Cys-439 contributes to the heme binding site.

Belongs to the cytochrome P450 family. Requires heme as cofactor.

It is found in the membrane. Functionally, converts indole-3-acetaldoxime to indole cyanohydrin. Involved in the biosynthetic pathway to 4-hydroxyindole-3-carbonyl nitrile (4-OH-ICN), a cyanogenic metabolite required for inducible pathogen defense. The chain is Cytochrome P450 71A12 (CYP71A12) from Arabidopsis thaliana (Mouse-ear cress).